A 193-amino-acid polypeptide reads, in one-letter code: Large ribosomal subunit protein bL9 (193 aa).

A disordered region spans residues 155-193 (AEGETLTSAEAIYDIQEKPLAENQEEMNDNDANSINEQA). Over residues 184 to 193 (NDANSINEQA) the composition is skewed to polar residues.

This sequence belongs to the bacterial ribosomal protein bL9 family.

In terms of biological role, binds to the 23S rRNA. The sequence is that of Large ribosomal subunit protein bL9 from Bartonella quintana (strain Toulouse) (Rochalimaea quintana).